Reading from the N-terminus, the 306-residue chain is GTP cyclohydrolase FolE2 (306 aa).

This sequence belongs to the GTP cyclohydrolase IV family.

It carries out the reaction GTP + H2O = 7,8-dihydroneopterin 3'-triphosphate + formate + H(+). It functions in the pathway cofactor biosynthesis; 7,8-dihydroneopterin triphosphate biosynthesis; 7,8-dihydroneopterin triphosphate from GTP: step 1/1. Its function is as follows. Converts GTP to 7,8-dihydroneopterin triphosphate. The polypeptide is GTP cyclohydrolase FolE2 (Pseudoalteromonas atlantica (strain T6c / ATCC BAA-1087)).